The primary structure comprises 288 residues: Glutamate racemase (288 aa).

Residues 10-11 and 42-43 each bind substrate; these read DS and YG. Cysteine 73 serves as the catalytic Proton donor/acceptor. 74-75 provides a ligand contact to substrate; that stretch reads NT. The Proton donor/acceptor role is filled by cysteine 184. 185 to 186 contacts substrate; that stretch reads TH.

Belongs to the aspartate/glutamate racemases family.

It catalyses the reaction L-glutamate = D-glutamate. The protein operates within cell wall biogenesis; peptidoglycan biosynthesis. In terms of biological role, provides the (R)-glutamate required for cell wall biosynthesis. This is Glutamate racemase from Corynebacterium kroppenstedtii (strain DSM 44385 / JCM 11950 / CIP 105744 / CCUG 35717).